The sequence spans 179 residues: Inosine/xanthosine triphosphatase (179 aa).

A Mg(2+)-binding site is contributed by Glu-71. 71-72 serves as a coordination point for substrate; that stretch reads EA.

The protein belongs to the YjjX NTPase family. In terms of assembly, homodimer. Requires Mg(2+) as cofactor. Mn(2+) is required as a cofactor.

It catalyses the reaction XTP + H2O = XDP + phosphate + H(+). The enzyme catalyses ITP + H2O = IDP + phosphate + H(+). Phosphatase that hydrolyzes non-canonical purine nucleotides such as XTP and ITP to their respective diphosphate derivatives. Probably excludes non-canonical purines from DNA/RNA precursor pool, thus preventing their incorporation into DNA/RNA and avoiding chromosomal lesions. This Shewanella sp. (strain ANA-3) protein is Inosine/xanthosine triphosphatase.